The primary structure comprises 422 residues: Enolase (422 aa).

Q162 lines the (2R)-2-phosphoglycerate pocket. Residue E204 is the Proton donor of the active site. Positions 241, 284, and 311 each coordinate Mg(2+). Residues K336, R365, S366, and K387 each coordinate (2R)-2-phosphoglycerate. The Proton acceptor role is filled by K336.

It belongs to the enolase family. Mg(2+) serves as cofactor.

It localises to the cytoplasm. The protein resides in the secreted. It is found in the cell surface. It catalyses the reaction (2R)-2-phosphoglycerate = phosphoenolpyruvate + H2O. It participates in carbohydrate degradation; glycolysis; pyruvate from D-glyceraldehyde 3-phosphate: step 4/5. Catalyzes the reversible conversion of 2-phosphoglycerate (2-PG) into phosphoenolpyruvate (PEP). It is essential for the degradation of carbohydrates via glycolysis. This chain is Enolase, found in Thermus thermophilus (strain ATCC 27634 / DSM 579 / HB8).